The primary structure comprises 538 residues: Putative cysteine ligase BshC (538 aa).

Residues 460-484 (KINEQIELLERMLKRNVEKKHEVEL) adopt a coiled-coil conformation.

It belongs to the BshC family.

Its function is as follows. Involved in bacillithiol (BSH) biosynthesis. May catalyze the last step of the pathway, the addition of cysteine to glucosamine malate (GlcN-Mal) to generate BSH. This Bacillus thuringiensis (strain Al Hakam) protein is Putative cysteine ligase BshC.